The following is a 208-amino-acid chain: 3-demethoxyubiquinol 3-hydroxylase (208 aa).

Glu-57, Glu-87, His-90, Glu-139, Glu-171, and His-174 together coordinate Fe cation.

It belongs to the COQ7 family. Fe cation is required as a cofactor.

The protein localises to the cell membrane. The catalysed reaction is a 5-methoxy-2-methyl-3-(all-trans-polyprenyl)benzene-1,4-diol + AH2 + O2 = a 3-demethylubiquinol + A + H2O. It participates in cofactor biosynthesis; ubiquinone biosynthesis. Its function is as follows. Catalyzes the hydroxylation of 2-nonaprenyl-3-methyl-6-methoxy-1,4-benzoquinol during ubiquinone biosynthesis. The protein is 3-demethoxyubiquinol 3-hydroxylase of Burkholderia vietnamiensis (strain G4 / LMG 22486) (Burkholderia cepacia (strain R1808)).